Consider the following 271-residue polypeptide: Phosphatidylglycerol--prolipoprotein diacylglyceryl transferase (271 aa).

The next 3 helical transmembrane spans lie at 17 to 37 (LAIHWYGLTYLAAFGLFFFLA), 63 to 83 (ILFLGVMGVVIGGRLGYCLFY), and 95 to 115 (IFAVWQGGMSFHGGMLGVLVS). Arg-146 contacts a 1,2-diacyl-sn-glycero-3-phospho-(1'-sn-glycerol). 3 helical membrane passes run 182 to 202 (SQVYQFLMEGLLLFVLLWLYA), 209 to 229 (GQVSGAFLVGYGVFRFIAEFF), and 243 to 263 (MSMGQWLCVPMIAAGIWLWIW).

Belongs to the Lgt family.

It localises to the cell inner membrane. The catalysed reaction is L-cysteinyl-[prolipoprotein] + a 1,2-diacyl-sn-glycero-3-phospho-(1'-sn-glycerol) = an S-1,2-diacyl-sn-glyceryl-L-cysteinyl-[prolipoprotein] + sn-glycerol 1-phosphate + H(+). Its pathway is protein modification; lipoprotein biosynthesis (diacylglyceryl transfer). Catalyzes the transfer of the diacylglyceryl group from phosphatidylglycerol to the sulfhydryl group of the N-terminal cysteine of a prolipoprotein, the first step in the formation of mature lipoproteins. This chain is Phosphatidylglycerol--prolipoprotein diacylglyceryl transferase, found in Polaromonas naphthalenivorans (strain CJ2).